The following is a 265-amino-acid chain: 3-methyl-2-oxobutanoate hydroxymethyltransferase (265 aa).

Mg(2+)-binding residues include Asp-45 and Asp-84. Residues 45–46, Asp-84, and Lys-112 each bind 3-methyl-2-oxobutanoate; that span reads DS. Residue Glu-114 coordinates Mg(2+). The Proton acceptor role is filled by Glu-181.

The protein belongs to the PanB family. Homodecamer; pentamer of dimers. It depends on Mg(2+) as a cofactor.

It is found in the cytoplasm. The enzyme catalyses 3-methyl-2-oxobutanoate + (6R)-5,10-methylene-5,6,7,8-tetrahydrofolate + H2O = 2-dehydropantoate + (6S)-5,6,7,8-tetrahydrofolate. It participates in cofactor biosynthesis; (R)-pantothenate biosynthesis; (R)-pantoate from 3-methyl-2-oxobutanoate: step 1/2. Functionally, catalyzes the reversible reaction in which hydroxymethyl group from 5,10-methylenetetrahydrofolate is transferred onto alpha-ketoisovalerate to form ketopantoate. In Yersinia enterocolitica serotype O:8 / biotype 1B (strain NCTC 13174 / 8081), this protein is 3-methyl-2-oxobutanoate hydroxymethyltransferase.